The chain runs to 554 residues: Acetyl-S-ACP:malonate ACP transferase (554 aa).

Its subcellular location is the cytoplasm. The catalysed reaction is acetyl-[ACP] + malonate = malonyl-[ACP] + acetate. Its function is as follows. Alpha subunit of the biotin-independent and biotin-dependent malonate decarboxylase multienzyme complex (EC 4.1.1.88 and EC 7.2.4.4, respectively). Acts as an acyl-carrier protein (ACP) transferase component. This first step in malonate decarboxylation involves the exchange of an acetyl thioester residue bound to the activated ACP subunit for a malonyl thioester residue. Has a weak activity with acetyl-CoA as substrate. The protein is Acetyl-S-ACP:malonate ACP transferase (madA) of Malonomonas rubra.